Here is a 366-residue protein sequence, read N- to C-terminus: Phospho-N-acetylmuramoyl-pentapeptide-transferase (366 aa).

A run of 10 helical transmembrane segments spans residues 3-23 (QIFI…PVLI), 55-75 (IAIL…GLVF), 80-100 (PGVS…VGFA), 118-138 (AKLI…LQFP), 161-181 (IAVG…NIVI), 197-217 (LASG…FWQF), 235-255 (PLDL…FLWW), 262-282 (IFMG…LSIT), 287-307 (LLMI…VIQV), and 341-361 (FWLL…GEWL).

Belongs to the glycosyltransferase 4 family. MraY subfamily. The cofactor is Mg(2+).

Its subcellular location is the cell membrane. It carries out the reaction UDP-N-acetyl-alpha-D-muramoyl-L-alanyl-gamma-D-glutamyl-meso-2,6-diaminopimeloyl-D-alanyl-D-alanine + di-trans,octa-cis-undecaprenyl phosphate = di-trans,octa-cis-undecaprenyl diphospho-N-acetyl-alpha-D-muramoyl-L-alanyl-D-glutamyl-meso-2,6-diaminopimeloyl-D-alanyl-D-alanine + UMP. The protein operates within cell wall biogenesis; peptidoglycan biosynthesis. Catalyzes the initial step of the lipid cycle reactions in the biosynthesis of the cell wall peptidoglycan: transfers peptidoglycan precursor phospho-MurNAc-pentapeptide from UDP-MurNAc-pentapeptide onto the lipid carrier undecaprenyl phosphate, yielding undecaprenyl-pyrophosphoryl-MurNAc-pentapeptide, known as lipid I. This chain is Phospho-N-acetylmuramoyl-pentapeptide-transferase, found in Corynebacterium urealyticum (strain ATCC 43042 / DSM 7109).